The following is a 96-amino-acid chain: Small ribosomal subunit protein bS6 (96 aa).

This sequence belongs to the bacterial ribosomal protein bS6 family.

Its function is as follows. Binds together with bS18 to 16S ribosomal RNA. This is Small ribosomal subunit protein bS6 from Streptomyces griseus subsp. griseus (strain JCM 4626 / CBS 651.72 / NBRC 13350 / KCC S-0626 / ISP 5235).